The primary structure comprises 76 residues: Large ribosomal subunit protein eL20 (76 aa).

This sequence belongs to the eukaryotic ribosomal protein eL20 family. In terms of assembly, part of the 50S ribosomal subunit. Binds 23S rRNA.

The polypeptide is Large ribosomal subunit protein eL20 (Methanococcus maripaludis (strain DSM 14266 / JCM 13030 / NBRC 101832 / S2 / LL)).